The sequence spans 465 residues: Ribulose bisphosphate carboxylase large chain (465 aa).

At Lys-4 the chain carries N6,N6,N6-trimethyllysine. The substrate site is built by Xaa-113 and Thr-163. The Proton acceptor role is filled by Lys-165. Lys-167 contributes to the substrate binding site. The Mg(2+) site is built by Lys-191, Asp-193, and Glu-194. An N6-carboxylysine modification is found at Lys-191. The Proton acceptor role is filled by His-284. Substrate-binding residues include Arg-285, His-317, and Ser-369.

Belongs to the RuBisCO large chain family. Type I subfamily. As to quaternary structure, heterohexadecamer of 8 large chains and 8 small chains; disulfide-linked. The disulfide link is formed within the large subunit homodimers. Mg(2+) is required as a cofactor. Post-translationally, the disulfide bond which can form in the large chain dimeric partners within the hexadecamer appears to be associated with oxidative stress and protein turnover.

Its subcellular location is the plastid. The protein resides in the chloroplast. It catalyses the reaction 2 (2R)-3-phosphoglycerate + 2 H(+) = D-ribulose 1,5-bisphosphate + CO2 + H2O. The catalysed reaction is D-ribulose 1,5-bisphosphate + O2 = 2-phosphoglycolate + (2R)-3-phosphoglycerate + 2 H(+). In terms of biological role, ruBisCO catalyzes two reactions: the carboxylation of D-ribulose 1,5-bisphosphate, the primary event in carbon dioxide fixation, as well as the oxidative fragmentation of the pentose substrate in the photorespiration process. Both reactions occur simultaneously and in competition at the same active site. This is Ribulose bisphosphate carboxylase large chain from Cornus obliqua (Silky dogwood).